Reading from the N-terminus, the 127-residue chain is Small integral membrane protein 33 (127 aa).

Residue N15 is glycosylated (N-linked (GlcNAc...) asparagine). Residues P38–V58 traverse the membrane as a helical segment.

It localises to the membrane. This chain is Small integral membrane protein 33, found in Mus musculus (Mouse).